Consider the following 197-residue polypeptide: Holliday junction branch migration complex subunit RuvA (197 aa).

The tract at residues 1–64 (MIALLRGLVV…EDVLALYGFL (64 aa)) is domain I. The interval 65 to 143 (TQDEKALFEK…AATGEEPGAP (79 aa)) is domain II. Residues 144–153 (AAEALSPIDQ) form a flexible linker region. The segment at 153–197 (QDVLSALLNLGCARPQAEAAVRKAKAAGASLDFEPLFRRALELVR) is domain III.

It belongs to the RuvA family. In terms of assembly, homotetramer. Forms an RuvA(8)-RuvB(12)-Holliday junction (HJ) complex. HJ DNA is sandwiched between 2 RuvA tetramers; dsDNA enters through RuvA and exits via RuvB. An RuvB hexamer assembles on each DNA strand where it exits the tetramer. Each RuvB hexamer is contacted by two RuvA subunits (via domain III) on 2 adjacent RuvB subunits; this complex drives branch migration. In the full resolvosome a probable DNA-RuvA(4)-RuvB(12)-RuvC(2) complex forms which resolves the HJ.

It localises to the cytoplasm. The RuvA-RuvB-RuvC complex processes Holliday junction (HJ) DNA during genetic recombination and DNA repair, while the RuvA-RuvB complex plays an important role in the rescue of blocked DNA replication forks via replication fork reversal (RFR). RuvA specifically binds to HJ cruciform DNA, conferring on it an open structure. The RuvB hexamer acts as an ATP-dependent pump, pulling dsDNA into and through the RuvAB complex. HJ branch migration allows RuvC to scan DNA until it finds its consensus sequence, where it cleaves and resolves the cruciform DNA. The sequence is that of Holliday junction branch migration complex subunit RuvA from Solibacter usitatus (strain Ellin6076).